The sequence spans 44 residues: Photosystem I reaction center subunit IX (44 aa).

The chain crosses the membrane as a helical span at residues tyrosine 7–isoleucine 27.

This sequence belongs to the PsaJ family.

It is found in the plastid. The protein resides in the chloroplast thylakoid membrane. In terms of biological role, may help in the organization of the PsaE and PsaF subunits. This Ceratophyllum demersum (Rigid hornwort) protein is Photosystem I reaction center subunit IX.